Consider the following 234-residue polypeptide: MKIENKSDKEEDQMFITFEGIDASGKTSLLAKLKAHVVQKNLQGKCTFTWEPGGRKSPEIQTIRHLILNKESNLSPIAEAFLYSSARRIHLDKVILPNLAKNKVVFCDRFVDSSFAYQAFGRDLGFEKIKLLNELATDKKYPDITFILKISYEESMERRKARQEDEDRLEKEENSFYQKVIKGYDFLASYPEFQKRIFVIDASKNQEEIFESVLKILKDHKTFQTHPIYKDFFS.

20–27 (GIDASGKT) is an ATP binding site.

It belongs to the thymidylate kinase family.

It catalyses the reaction dTMP + ATP = dTDP + ADP. In terms of biological role, phosphorylation of dTMP to form dTDP in both de novo and salvage pathways of dTTP synthesis. The sequence is that of Thymidylate kinase from Mycoplasmopsis pulmonis (strain UAB CTIP) (Mycoplasma pulmonis).